A 305-amino-acid chain; its full sequence is MSTIDKEAVKLYLMQLQDQICQRLEQEDGKATFIEDAWYREPGDRLGGGGRTRVMRDGNVFEQGGVNFSHVQGNAMPASATAHRPELAGRRFEAMGVSLVMHPHNPYVPTSHANVRFFIAEKEGEAPIWWFGGGFDLTPFYPFEEDCQFWHNTAKEVCAPFGADVYAQHKAWCDDYFYLPHRGETRGIGGLFFDDLNQWEFDKCFDYIKAVGEGYCDAYLPIVERRKVTEYGEREREFQLYRRGRYVEFNLVYDRGTLFGLQSGGRTESILMSMPPLARWEYSYEPQADSPEASLYQHYLKPREW.

Substrate is bound at residue serine 98. Histidine 102 and histidine 112 together coordinate a divalent metal cation. Histidine 112 acts as the Proton donor in catalysis. Residue 114–116 (NVR) participates in substrate binding. 2 residues coordinate a divalent metal cation: histidine 151 and histidine 181. Residues 246–281 (YVEFNLVYDRGTLFGLQSGGRTESILMSMPPLARWE) form an important for dimerization region. A substrate-binding site is contributed by 264-266 (GGR).

Belongs to the aerobic coproporphyrinogen-III oxidase family. As to quaternary structure, homodimer. A divalent metal cation serves as cofactor.

It localises to the cytoplasm. The catalysed reaction is coproporphyrinogen III + O2 + 2 H(+) = protoporphyrinogen IX + 2 CO2 + 2 H2O. The protein operates within porphyrin-containing compound metabolism; protoporphyrin-IX biosynthesis; protoporphyrinogen-IX from coproporphyrinogen-III (O2 route): step 1/1. In terms of biological role, involved in the heme biosynthesis. Catalyzes the aerobic oxidative decarboxylation of propionate groups of rings A and B of coproporphyrinogen-III to yield the vinyl groups in protoporphyrinogen-IX. This chain is Oxygen-dependent coproporphyrinogen-III oxidase, found in Vibrio vulnificus (strain CMCP6).